A 506-amino-acid polypeptide reads, in one-letter code: Cobyric acid synthase (506 aa).

One can recognise a GATase cobBQ-type domain in the interval 254-453; the sequence is DLDIAVIRLP…IHGIFESDSF (200 aa). C334 (nucleophile) is an active-site residue. H445 is an active-site residue.

Belongs to the CobB/CobQ family. CobQ subfamily.

The protein operates within cofactor biosynthesis; adenosylcobalamin biosynthesis. In terms of biological role, catalyzes amidations at positions B, D, E, and G on adenosylcobyrinic A,C-diamide. NH(2) groups are provided by glutamine, and one molecule of ATP is hydrogenolyzed for each amidation. This is Cobyric acid synthase from Dehalococcoides mccartyi (strain ATCC BAA-2266 / KCTC 15142 / 195) (Dehalococcoides ethenogenes (strain 195)).